The sequence spans 389 residues: Chalcone synthase 1 (389 aa).

C164 is a catalytic residue.

Belongs to the thiolase-like superfamily. Chalcone/stilbene synthases family.

The catalysed reaction is (E)-4-coumaroyl-CoA + 3 malonyl-CoA + 3 H(+) = 2',4,4',6'-tetrahydroxychalcone + 3 CO2 + 4 CoA. It participates in secondary metabolite biosynthesis; flavonoid biosynthesis. Its function is as follows. The primary product of this enzyme is 4,2',4',6'-tetrahydroxychalcone (also termed naringenin-chalcone or chalcone) which can under specific conditions spontaneously isomerize into naringenin. The chain is Chalcone synthase 1 (CHS1) from Camellia sinensis (Tea plant).